The primary structure comprises 1123 residues: Telomerase reverse transcriptase (1123 aa).

The segment at 1 to 230 (MPRAPRCRAV…ARRRRGSPGS (230 aa)) is RNA-interacting domain 1. Positions 58 to 197 (VPWGARPPPA…APGLPGLPGL (140 aa)) are GQ motif. Positions 137–141 (WGLLL) are required for regulating specificity for telomeric DNA and for processivity for primer elongation. The disordered stretch occupies residues 202 to 311 (AGAGASADLR…GVPHDPAHPE (110 aa)). The Bipartite nuclear localization signal motif lies at 222–240 (RRRRGSPGSGVPLAKRPRR). At S227 the chain carries Phosphoserine; by PKB/AKT1. The tract at residues 231 to 308 (GVPLAKRPRR…GPQGVPHDPA (78 aa)) is linker. Residues 260–279 (PPVSEAPAVTPAVAASPAAS) show a composition bias toward low complexity. The interval 309–539 (HPETKRFLYC…LARFLVLVDG (231 aa)) is RNA-interacting domain 2. Residues 312–317 (TKRFLY) carry the TFLY; involved in RNA binding motif. The interval 360-510 (ARRMRRLPAR…MKVRDCTWLH (151 aa)) is QFP motif. Positions 381-401 (LGNHARCPYRALLRTHCPLRA) are CP motif. S446 carries the post-translational modification Phosphoserine; by DYRK2. The region spanning 595-926 (EVRRHREARP…CLFPWCGLLL (332 aa)) is the Reverse transcriptase domain. Phosphotyrosine; by SRC-type Tyr-kinases is present on Y697. Positions 702, 859, and 860 each coordinate Mg(2+). Positions 905 to 919 (LGSAAPLQLPAHCLF) are required for oligomerization. Residues 921 to 925 (WCGLL) are primer grip sequence. Residues 927–1123 (DTRTLEVSCD…LTADFKTILD (197 aa)) are CTE.

Belongs to the reverse transcriptase family. Telomerase subfamily. In terms of assembly, catalytic component of the telomerase holoenzyme complex composed of one molecule of TERT, one molecule of WRAP53/TCAB1, two molecules of H/ACA ribonucleoprotein complex subunits DKC1, NOP10, NHP2 and GAR1, and a telomerase RNA template component (TERC). The telomerase holoenzyme complex is associated with TEP1, SMG6/EST1A and POT1. The molecular chaperone HSP90/P23 complex is required for correct assembly and stabilization of the active telomerase. Interacts directly with HSP90A and PTGES3. Interacts with HSPA1A; the interaction occurs in the absence of TERC and dissociates once the complex has formed. Interacts with RAN; the interaction promotes nuclear export of TERT. Interacts with XPO1. Interacts with PTPN11; the interaction retains TERT in the nucleus. Interacts with NCL (via RRM1 and C-terminal RRM4/Arg/Gly-rich domains); the interaction is important for nucleolar localization of TERT. Interacts with SMARCA4 (via the bromodomain); the interaction regulates Wnt-mediated signaling. Interacts with MCRS1 (isoform MCRS2); the interaction inhibits in vitro telomerase activity. Interacts with PIF1; the interaction has no effect on the elongation activity of TERT. Interacts with PML; the interaction recruits TERT to PML bodies and inhibits telomerase activity. Interacts with GNL3L. Interacts with isoform 1 and isoform 2 of NVL. Interacts with DHX36. Interacts with ATF7. Phosphorylation at Tyr-697 under oxidative stress leads to translocation of TERT to the cytoplasm and reduces its antiapoptotic activity. Dephosphorylated by SHP2/PTPN11 leading to nuclear retention. Phosphorylation at Ser-227 by the AKT pathway promotes nuclear location. Phosphorylation at the G2/M phase at Ser-446 by DYRK2 promotes ubiquitination by the EDVP complex and degradation. In terms of processing, ubiquitinated by the EDVP complex, a E3 ligase complex following phosphorylation at Ser-446 by DYRK2. Ubiquitinated leads to proteasomal degradation.

It localises to the nucleus. The protein resides in the nucleolus. The protein localises to the nucleoplasm. Its subcellular location is the chromosome. It is found in the telomere. It localises to the cytoplasm. The protein resides in the PML body. The enzyme catalyses DNA(n) + a 2'-deoxyribonucleoside 5'-triphosphate = DNA(n+1) + diphosphate. In terms of biological role, telomerase is a ribonucleoprotein enzyme essential for the replication of chromosome termini in most eukaryotes. Active in progenitor and cancer cells. Inactive, or very low activity, in normal somatic cells. Catalytic component of the teleromerase holoenzyme complex whose main activity is the elongation of telomeres by acting as a reverse transcriptase that adds simple sequence repeats to chromosome ends by copying a template sequence within the RNA component of the enzyme. Catalyzes the RNA-dependent extension of 3'-chromosomal termini with the 6-nucleotide telomeric repeat unit, 5'-TTAGGG-3'. The catalytic cycle involves primer binding, primer extension and release of product once the template boundary has been reached or nascent product translocation followed by further extension. More active on substrates containing 2 or 3 telomeric repeats. Telomerase activity is regulated by a number of factors including telomerase complex-associated proteins, chaperones and polypeptide modifiers. Modulates Wnt signaling. Plays important roles in aging and antiapoptosis. This chain is Telomerase reverse transcriptase (TERT), found in Canis lupus familiaris (Dog).